A 339-amino-acid chain; its full sequence is MNASDASMTVIGAGSYGTALAITLARNGHRVVLWGHNPTHIQALQAARCNQAFLPDVPFPDSLQLETNLAHALAASRNVLVVVPSHVFGDVLRQLKPHLRADARIVWATKGLEAETGRLLQDVAREALGETIPLAVVSGPTFAKELAAGMPTAIALASPDSEFADDLQQLLHCGKSFRVYSNPDFIGVQLGGAVKNVIAIGAGMSDGIGFGANARTALITRGLAEMTRLGAALGADPTTFMGMAGLGDLVLTCTDNQSRNRRFGMMLGQGMDVQSAQDSIGQVVEGYRNTKEVLALAQRYGVEMPITEQLWQVLYCGKDAREAALSLLGRTRKDETAKL.

4 residues coordinate NADPH: Ser15, Tyr16, His36, and Lys110. Positions 110, 139, and 141 each coordinate sn-glycerol 3-phosphate. An NADPH-binding site is contributed by Ala143. Positions 195, 248, 258, 259, and 260 each coordinate sn-glycerol 3-phosphate. Lys195 serves as the catalytic Proton acceptor. An NADPH-binding site is contributed by Arg259. The NADPH site is built by Val283 and Glu285.

This sequence belongs to the NAD-dependent glycerol-3-phosphate dehydrogenase family.

It localises to the cytoplasm. It catalyses the reaction sn-glycerol 3-phosphate + NAD(+) = dihydroxyacetone phosphate + NADH + H(+). The enzyme catalyses sn-glycerol 3-phosphate + NADP(+) = dihydroxyacetone phosphate + NADPH + H(+). The protein operates within membrane lipid metabolism; glycerophospholipid metabolism. In terms of biological role, catalyzes the reduction of the glycolytic intermediate dihydroxyacetone phosphate (DHAP) to sn-glycerol 3-phosphate (G3P), the key precursor for phospholipid synthesis. The protein is Glycerol-3-phosphate dehydrogenase [NAD(P)+] of Pectobacterium atrosepticum (strain SCRI 1043 / ATCC BAA-672) (Erwinia carotovora subsp. atroseptica).